The following is a 123-amino-acid chain: Large ribosomal subunit protein uL18 (123 aa).

It belongs to the universal ribosomal protein uL18 family. As to quaternary structure, part of the 50S ribosomal subunit; part of the 5S rRNA/L5/L18/L25 subcomplex. Contacts the 5S and 23S rRNAs.

In terms of biological role, this is one of the proteins that bind and probably mediate the attachment of the 5S RNA into the large ribosomal subunit, where it forms part of the central protuberance. The protein is Large ribosomal subunit protein uL18 of Bifidobacterium longum (strain DJO10A).